A 221-amino-acid polypeptide reads, in one-letter code: Ribonuclease 3 (221 aa).

The region spanning 4–121 (LEQLEKKLGY…LWAAVYIDSG (118 aa)) is the RNase III domain. Glu-40 is a binding site for Mg(2+). The active site involves Asp-44. Residues Asp-107 and Glu-110 each contribute to the Mg(2+) site. Residue Glu-110 is part of the active site. In terms of domain architecture, DRBM spans 151–219 (DYKTILQEIT…AEELIKLLEE (69 aa)).

It belongs to the ribonuclease III family. Homodimer. Mg(2+) is required as a cofactor.

It localises to the cytoplasm. It carries out the reaction Endonucleolytic cleavage to 5'-phosphomonoester.. Digests double-stranded RNA. Involved in the processing of primary rRNA transcript to yield the immediate precursors to the large and small rRNAs (23S and 16S). Also processes some mRNAs, and tRNAs when they are encoded in the rRNA operon. Probably processes pre-crRNA and tracrRNA of type II CRISPR loci if present in the organism. The protein is Ribonuclease 3 (rnc) of Aquifex aeolicus (strain VF5).